The primary structure comprises 271 residues: Phthiotriol/phenolphthiotriol dimycocerosates methyltransferase 1 (271 aa).

It belongs to the methyltransferase superfamily. Phthiotriol/phenolphthiotriol dimycocerosates methyltransferase family.

Its function is as follows. Catalyzes the methylation of the lipid moiety of the intermediate compounds phthiotriol and glycosylated phenolphthiotriol dimycoserosates to form phthiocerol dimycocerosates (DIM A) and glycosylated phenolphthiocerol dimycocerosates (PGL). This chain is Phthiotriol/phenolphthiotriol dimycocerosates methyltransferase 1, found in Mycobacterium ulcerans (strain Agy99).